Here is a 517-residue protein sequence, read N- to C-terminus: GTPase Obg (517 aa).

One can recognise an Obg domain in the interval alanine 2–valine 159. The region spanning alanine 160–lysine 336 is the OBG-type G domain. Residues glycine 166 to serine 173, phenylalanine 191 to histidine 195, aspartate 212 to glycine 215, asparagine 288 to aspartate 291, and serine 317 to valine 319 contribute to the GTP site. Mg(2+)-binding residues include serine 173 and threonine 193. The 85-residue stretch at proline 355–proline 439 folds into the OCT domain. The disordered stretch occupies residues glutamate 490–alanine 517. Residues alanine 497 to alanine 517 are compositionally biased toward acidic residues.

Belongs to the TRAFAC class OBG-HflX-like GTPase superfamily. OBG GTPase family. In terms of assembly, monomer. The cofactor is Mg(2+).

The protein resides in the cytoplasm. In terms of biological role, an essential GTPase which binds GTP, GDP and possibly (p)ppGpp with moderate affinity, with high nucleotide exchange rates and a fairly low GTP hydrolysis rate. Plays a role in control of the cell cycle, stress response, ribosome biogenesis and in those bacteria that undergo differentiation, in morphogenesis control. The protein is GTPase Obg of Clavibacter sepedonicus (Clavibacter michiganensis subsp. sepedonicus).